Consider the following 529-residue polypeptide: Na(+)/H(+) antiporter NhaB (529 aa).

Helical transmembrane passes span 13 to 33 (FLGK…IINP), 34 to 54 (IVFF…EFIF), 90 to 110 (LVAN…IYFM), 113 to 133 (LLLF…ILSL), 136 to 156 (CFAA…AVVI), 205 to 225 (LLMH…VGEP), 241 to 261 (FLIR…LTCF), 306 to 326 (GLIA…VGLI), 327 to 347 (GLSV…HSLG), 351 to 371 (EEAL…AVII), 451 to 471 (ATPN…APLI), and 479 to 499 (VIMA…GIVF).

Belongs to the NhaB Na(+)/H(+) (TC 2.A.34) antiporter family.

It is found in the cell inner membrane. It catalyses the reaction 2 Na(+)(in) + 3 H(+)(out) = 2 Na(+)(out) + 3 H(+)(in). Its function is as follows. Na(+)/H(+) antiporter that extrudes sodium in exchange for external protons. The sequence is that of Na(+)/H(+) antiporter NhaB from Vibrio vulnificus (strain CMCP6).